Reading from the N-terminus, the 186-residue chain is Ribosome-recycling factor (186 aa).

Belongs to the RRF family.

Its subcellular location is the cytoplasm. Functionally, responsible for the release of ribosomes from messenger RNA at the termination of protein biosynthesis. May increase the efficiency of translation by recycling ribosomes from one round of translation to another. This is Ribosome-recycling factor from Rickettsia rickettsii (strain Iowa).